The primary structure comprises 267 residues: Tryptophan synthase alpha chain (267 aa).

Active-site proton acceptor residues include glutamate 49 and aspartate 60.

Belongs to the TrpA family. Tetramer of two alpha and two beta chains.

It catalyses the reaction (1S,2R)-1-C-(indol-3-yl)glycerol 3-phosphate + L-serine = D-glyceraldehyde 3-phosphate + L-tryptophan + H2O. Its pathway is amino-acid biosynthesis; L-tryptophan biosynthesis; L-tryptophan from chorismate: step 5/5. The alpha subunit is responsible for the aldol cleavage of indoleglycerol phosphate to indole and glyceraldehyde 3-phosphate. This is Tryptophan synthase alpha chain from Pelobacter propionicus (strain DSM 2379 / NBRC 103807 / OttBd1).